The primary structure comprises 145 residues: D-aminoacyl-tRNA deacylase (145 aa).

The short motif at 137 to 138 (GP) is the Gly-cisPro motif, important for rejection of L-amino acids element.

This sequence belongs to the DTD family. As to quaternary structure, homodimer.

The protein resides in the cytoplasm. It catalyses the reaction glycyl-tRNA(Ala) + H2O = tRNA(Ala) + glycine + H(+). The catalysed reaction is a D-aminoacyl-tRNA + H2O = a tRNA + a D-alpha-amino acid + H(+). Its function is as follows. An aminoacyl-tRNA editing enzyme that deacylates mischarged D-aminoacyl-tRNAs. Also deacylates mischarged glycyl-tRNA(Ala), protecting cells against glycine mischarging by AlaRS. Acts via tRNA-based rather than protein-based catalysis; rejects L-amino acids rather than detecting D-amino acids in the active site. By recycling D-aminoacyl-tRNA to D-amino acids and free tRNA molecules, this enzyme counteracts the toxicity associated with the formation of D-aminoacyl-tRNA entities in vivo and helps enforce protein L-homochirality. The sequence is that of D-aminoacyl-tRNA deacylase from Cereibacter sphaeroides (strain ATCC 17029 / ATH 2.4.9) (Rhodobacter sphaeroides).